A 210-amino-acid chain; its full sequence is 23.5 kDa heat shock protein, mitochondrial (210 aa).

The transit peptide at 1–20 (MASSSALALRRLLSSSTVAV) directs the protein to the mitochondrion. In terms of domain architecture, sHSP spans 102 to 210 (MGASGVRRGW…RNNIRHINVD (109 aa)).

It belongs to the small heat shock protein (HSP20) family. May form oligomeric structures.

It is found in the mitochondrion. This Arabidopsis thaliana (Mouse-ear cress) protein is 23.5 kDa heat shock protein, mitochondrial (HSP23.5).